Reading from the N-terminus, the 155-residue chain is Deoxyuridine 5'-triphosphate nucleotidohydrolase (155 aa).

Substrate is bound by residues 74–76, Asn-87, and 91–93; these read RSG and LID.

Belongs to the dUTPase family. The cofactor is Mg(2+).

It catalyses the reaction dUTP + H2O = dUMP + diphosphate + H(+). It functions in the pathway pyrimidine metabolism; dUMP biosynthesis; dUMP from dCTP (dUTP route): step 2/2. This enzyme is involved in nucleotide metabolism: it produces dUMP, the immediate precursor of thymidine nucleotides and it decreases the intracellular concentration of dUTP so that uracil cannot be incorporated into DNA. The polypeptide is Deoxyuridine 5'-triphosphate nucleotidohydrolase (Xanthomonas oryzae pv. oryzae (strain PXO99A)).